Here is a 230-residue protein sequence, read N- to C-terminus: Demethylmenaquinone methyltransferase (230 aa).

Residues Thr62, Asp80, 100–101 (DG), and Ser117 contribute to the S-adenosyl-L-methionine site.

The protein belongs to the class I-like SAM-binding methyltransferase superfamily. MenG/UbiE family.

It carries out the reaction a 2-demethylmenaquinol + S-adenosyl-L-methionine = a menaquinol + S-adenosyl-L-homocysteine + H(+). The protein operates within quinol/quinone metabolism; menaquinone biosynthesis; menaquinol from 1,4-dihydroxy-2-naphthoate: step 2/2. In terms of biological role, methyltransferase required for the conversion of demethylmenaquinol (DMKH2) to menaquinol (MKH2). The chain is Demethylmenaquinone methyltransferase from Corynebacterium glutamicum (strain ATCC 13032 / DSM 20300 / JCM 1318 / BCRC 11384 / CCUG 27702 / LMG 3730 / NBRC 12168 / NCIMB 10025 / NRRL B-2784 / 534).